We begin with the raw amino-acid sequence, 142 residues long: Large ribosomal subunit protein uL11 (142 aa).

The protein belongs to the universal ribosomal protein uL11 family. Part of the ribosomal stalk of the 50S ribosomal subunit. Interacts with L10 and the large rRNA to form the base of the stalk. L10 forms an elongated spine to which L12 dimers bind in a sequential fashion forming a multimeric L10(L12)X complex. Post-translationally, one or more lysine residues are methylated.

Forms part of the ribosomal stalk which helps the ribosome interact with GTP-bound translation factors. This is Large ribosomal subunit protein uL11 from Bradyrhizobium sp. (strain ORS 278).